A 98-amino-acid polypeptide reads, in one-letter code: NADH-ubiquinone oxidoreductase chain 4L (98 aa).

The next 3 helical transmembrane spans lie at 1–21, 29–49, and 61–81; these read MSMV…GLLM, SLLC…ATIL, and IILL…LVTV.

The protein belongs to the complex I subunit 4L family. As to quaternary structure, core subunit of respiratory chain NADH dehydrogenase (Complex I) which is composed of 45 different subunits.

The protein localises to the mitochondrion inner membrane. It catalyses the reaction a ubiquinone + NADH + 5 H(+)(in) = a ubiquinol + NAD(+) + 4 H(+)(out). Functionally, core subunit of the mitochondrial membrane respiratory chain NADH dehydrogenase (Complex I) which catalyzes electron transfer from NADH through the respiratory chain, using ubiquinone as an electron acceptor. Part of the enzyme membrane arm which is embedded in the lipid bilayer and involved in proton translocation. In Pusa caspica (Caspian seal), this protein is NADH-ubiquinone oxidoreductase chain 4L (MT-ND4L).